The sequence spans 1670 residues: Collagen alpha-3(IV) chain (1670 aa).

The signal sequence occupies residues 1–28 (MSARTAPRPQVLLLPLLLVLLAAAPAAS). The 7S domain stretch occupies residues 29–42 (KGCVCKDKGQCFCD). Residues 43–1438 (GAKGEKGEKG…KGKRGDSGSP (1396 aa)) are triple-helical region. 3 disordered regions span residues 49 to 78 (GEKGFPGPPGSPGQKGFTGPEGLPGPQGPK), 167 to 469 (LDAK…DGPK), and 502 to 1442 (GRQG…ATWT). The span at 176 to 200 (PGAPGPQGLPGPPGFPGPVGPPGPP) shows a compositional bias: pro residues. Residues 202–212 (FFGFPGAMGPR) show a composition bias toward low complexity. A compositionally biased stretch (basic and acidic residues) spans 217–231 (HMGERVIGHKGERGV). Over residues 242–251 (GTVIVTLTGP) the composition is skewed to low complexity. N-linked (GlcNAc...) asparagine glycosylation is present at Asn-253. The span at 253–266 (NRTDLKGEKGDKGA) shows a compositional bias: basic and acidic residues. A compositionally biased stretch (low complexity) spans 382-394 (SPGSSRPGLRGAP). The segment covering 402 to 411 (SKGERGRPGK) has biased composition (basic and acidic residues). Low complexity predominate over residues 415–428 (GTPGSPGCAGSPGL). Pro residues-rich tracts occupy residues 429 to 438 (PGSPGPPGPP), 598 to 618 (PGDPGSPGSPGPAGPAGPPGY), and 654 to 675 (VPGPPGPPGPPGHPGPQGPPGI). Residues 791–793 (RGD) carry the Cell attachment site motif. Positions 900–909 (IGPPGPPGNP) are enriched in pro residues. Over residues 974–987 (VPGMPGLKGLKGLP) the composition is skewed to low complexity. The short motif at 996 to 998 (RGD) is the Cell attachment site element. 3 stretches are compositionally biased toward low complexity: residues 1013-1025 (IPGSMGNMGMPGS), 1094-1105 (LGPAGPEGAPGS), and 1118-1133 (HGDLGFKGIKGLLGPP). The span at 1135–1148 (IRGPPGLPGFPGSP) shows a compositional bias: pro residues. The Cell attachment site motif lies at 1154 to 1156 (RGD). Composition is skewed to low complexity over residues 1230-1250 (PGAIIPGQTGNRGPPGSRGSP) and 1290-1299 (PPGRLGAPGT). A Cell attachment site motif is present at residues 1306–1308 (RGD). Over residues 1332–1341 (PPGPIGPKGP) the composition is skewed to pro residues. 2 consecutive short sequence motifs (cell attachment site) follow at residues 1345-1347 (RGD) and 1432-1434 (RGD). Residues 1427–1444 (GLKGKRGDSGSPATWTTR) form an epitope recognized by Goodpasture antibodies region. Residues 1445-1669 (GFVFTRHSQT…SRCQVCMKKR (225 aa)) form the Collagen IV NC1 domain. 6 disulfides stabilise this stretch: Cys-1460-Cys-1551, Cys-1493-Cys-1548, Cys-1505-Cys-1511, Cys-1570-Cys-1665, Cys-1604-Cys-1662, and Cys-1616-Cys-1622. The segment at 1479-1557 (NQRAHGQDLG…CTVCEGPAIA (79 aa)) is required for the anti-angiogenic activity of tumstatin. Residue Met-1533 forms an S-Lysyl-methionine sulfilimine (Met-Lys) (interchain with K-1651) linkage. The segment at 1610–1628 (ASPFLECHGRGTCNYYSNS) is required for the anti-tumor cell activity of tumstatin. Lys-1651 is covalently cross-linked (S-Lysyl-methionine sulfilimine (Lys-Met) (interchain with M-1533)).

It belongs to the type IV collagen family. There are six type IV collagen isoforms, alpha 1(IV)-alpha 6(IV), each of which can form a triple helix structure with 2 other chains to generate type IV collagen network. The alpha 3(IV) chain forms a triple helical protomer with alpha 4(IV) and alpha 5(IV); this triple helical structure dimerizes through NC1-NC1 domain interactions such that the alpha 3(IV), alpha 4(IV) and alpha 5(IV) chains of one protomer connect with the alpha 5(IV), alpha 4(IV) and alpha 3(IV) chains of the opposite promoter, respectively. Interacts with ITGB3. Associates with LAMB2 at the neuromuscular junction and in GBM. Post-translationally, prolines at the third position of the tripeptide repeating unit (G-X-Y) are hydroxylated in some or all of the chains. Isoform 2 contains an additional N-linked glycosylation site. In terms of processing, type IV collagens contain numerous cysteine residues which are involved in inter- and intramolecular disulfide bonding. 12 of these, located in the NC1 domain, are conserved in all known type IV collagens. Post-translationally, the trimeric structure of the NC1 domains is stabilized by covalent bonds between Lys and Met residues. Phosphorylated. Thought to be phosphorylated by CERT, but CERT does not have kinase activity. Alpha 3 and alpha 4 type IV collagens are colocalized and present in kidney, eye, basement membranes of lens capsule, cochlea, lung, skeletal muscle, aorta, synaptic fibers, fetal kidney and fetal lung. PubMed:8083201 reports similar levels of expression of alpha 3 and alpha 4 type IV collagens in kidney, but PubMed:7523402 reports that in kidney levels of alpha 3 type IV collagen are significantly lower than those of alpha 4 type IV collagen. According to PubMed:8083201, alpha 3 type IV collagen is not detected in heart, brain, placenta, liver, pancreas, extrasynaptic muscle fibers, endoneurial and perineurial nerves, fetal brain, fetal heart and fetal liver. According to PubMed:7523402, alpha 3 type IV collagen is strongly expressed in pancreas, neuroretina and calvaria and not expressed in adrenal, ileum and skin. Isoform 1 and isoform 3 are strongly expressed in kidney, lung, suprarenal capsule, muscle and spleen, in each of these tissues isoform 1 is more abundant than isoform 3. Isoform 1 and isoform 3 are expressed at low levels in artery, fat, pericardium and peripherical nerve, but not in placenta, mesangium, skin, pleura and cultured umbilical endothelial cells.

It localises to the secreted. Its subcellular location is the extracellular space. The protein resides in the extracellular matrix. It is found in the basement membrane. Type IV collagen is the major structural component of glomerular basement membranes (GBM), forming a 'chicken-wire' meshwork together with laminins, proteoglycans and entactin/nidogen. Its function is as follows. Tumstatin, a cleavage fragment corresponding to the collagen alpha 3(IV) NC1 domain, possesses both anti-angiogenic and anti-tumor cell activity; these two anti-tumor properties may be regulated via RGD-independent ITGB3-mediated mechanisms. The sequence is that of Collagen alpha-3(IV) chain (COL4A3) from Homo sapiens (Human).